A 374-amino-acid polypeptide reads, in one-letter code: Flagellar P-ring protein 1 (374 aa).

A signal peptide spans 1 to 26; that stretch reads MVPNLMVIKKHLIGLLLILCPLSLQA.

This sequence belongs to the FlgI family. The basal body constitutes a major portion of the flagellar organelle and consists of four rings (L,P,S, and M) mounted on a central rod.

The protein localises to the periplasm. It is found in the bacterial flagellum basal body. In terms of biological role, assembles around the rod to form the L-ring and probably protects the motor/basal body from shearing forces during rotation. The sequence is that of Flagellar P-ring protein 1 from Photobacterium profundum (strain SS9).